A 59-amino-acid polypeptide reads, in one-letter code: Large ribosomal subunit protein uL30 (59 aa).

This sequence belongs to the universal ribosomal protein uL30 family. Part of the 50S ribosomal subunit.

This is Large ribosomal subunit protein uL30 from Buchnera aphidicola subsp. Acyrthosiphon kondoi (Acyrthosiphon kondoi symbiotic bacterium).